The following is a 233-amino-acid chain: Zinc import ATP-binding protein ZnuC (233 aa).

The ABC transporter domain occupies 6-222; that stretch reads IEFRNVSKKF…SEFSNALSSL (217 aa). 38–45 contributes to the ATP binding site; it reads GPNGAGKT.

The protein belongs to the ABC transporter superfamily. Zinc importer (TC 3.A.1.15.5) family. In terms of assembly, the complex is composed of two ATP-binding proteins (ZnuC), two transmembrane proteins (ZnuB) and a solute-binding protein (ZnuA).

Its subcellular location is the cell inner membrane. The enzyme catalyses Zn(2+)(out) + ATP(in) + H2O(in) = Zn(2+)(in) + ADP(in) + phosphate(in) + H(+)(in). In terms of biological role, part of the ABC transporter complex ZnuABC involved in zinc import. Responsible for energy coupling to the transport system. In Rickettsia prowazekii (strain Madrid E), this protein is Zinc import ATP-binding protein ZnuC.